Reading from the N-terminus, the 215-residue chain is Ribose-5-phosphate isomerase A (215 aa).

Substrate-binding positions include 26-29, 79-82, and 92-95; these read TGST, DGAD, and KGGG. The active-site Proton acceptor is the Glu101. Lys119 contacts substrate.

It belongs to the ribose 5-phosphate isomerase family. Homodimer.

It catalyses the reaction aldehydo-D-ribose 5-phosphate = D-ribulose 5-phosphate. It participates in carbohydrate degradation; pentose phosphate pathway; D-ribose 5-phosphate from D-ribulose 5-phosphate (non-oxidative stage): step 1/1. Functionally, catalyzes the reversible conversion of ribose-5-phosphate to ribulose 5-phosphate. The sequence is that of Ribose-5-phosphate isomerase A from Xylella fastidiosa (strain 9a5c).